The sequence spans 423 residues: UPF0229 protein PSPPH_0628 (423 aa).

The interval 65 to 110 is disordered; the sequence is HHGRGGKQTVVHPGNKEFTTGEHIARPQGGGGGKGPGKAGNSGEGM. Over residues 92 to 107 the composition is skewed to gly residues; the sequence is QGGGGGKGPGKAGNSG.

Belongs to the UPF0229 family.

The sequence is that of UPF0229 protein PSPPH_0628 from Pseudomonas savastanoi pv. phaseolicola (strain 1448A / Race 6) (Pseudomonas syringae pv. phaseolicola (strain 1448A / Race 6)).